Here is a 176-residue protein sequence, read N- to C-terminus: Peptide deformylase (176 aa).

Fe cation is bound by residues Cys97 and His139. Glu140 is an active-site residue. His143 is a Fe cation binding site.

The protein belongs to the polypeptide deformylase family. Fe(2+) serves as cofactor.

The catalysed reaction is N-terminal N-formyl-L-methionyl-[peptide] + H2O = N-terminal L-methionyl-[peptide] + formate. Its function is as follows. Removes the formyl group from the N-terminal Met of newly synthesized proteins. Requires at least a dipeptide for an efficient rate of reaction. N-terminal L-methionine is a prerequisite for activity but the enzyme has broad specificity at other positions. The sequence is that of Peptide deformylase from Thermomicrobium roseum (strain ATCC 27502 / DSM 5159 / P-2).